A 148-amino-acid chain; its full sequence is Histone H2A-like 3 (148 aa).

The disordered stretch occupies residues 101 to 128; that stretch reads DDTHSQVEEMPQSEEEEEEEEEKEEEMV. The segment covering 111–127 has biased composition (acidic residues); the sequence is PQSEEEEEEEEEKEEEM.

It belongs to the histone H2A family. The nucleosome is a histone octamer containing two molecules each of H2A, H2B, H3 and H4 assembled in one H3-H4 heterotetramer and two H2A-H2B heterodimers. The octamer wraps approximately 147 bp of DNA.

The protein localises to the nucleus. It localises to the chromosome. Functionally, core component of nucleosome. Nucleosomes wrap and compact DNA into chromatin, limiting DNA accessibility to the cellular machineries which require DNA as a template. Histones thereby play a central role in transcription regulation, DNA repair, DNA replication and chromosomal stability. DNA accessibility is regulated via a complex set of post-translational modifications of histones, also called histone code, and nucleosome remodeling. The sequence is that of Histone H2A-like 3 from Homo sapiens (Human).